The chain runs to 310 residues: Small ribosomal subunit biogenesis GTPase RsgA (310 aa).

The 160-residue stretch at 77–236 (KNELKRPNIA…IADTPGFSKL (160 aa)) folds into the CP-type G domain. GTP-binding positions include 126–129 (SKID) and 179–187 (GQTGVGKST). Positions 260, 266, 268, and 274 each coordinate Zn(2+).

Belongs to the TRAFAC class YlqF/YawG GTPase family. RsgA subfamily. Monomer. Associates with 30S ribosomal subunit, binds 16S rRNA. Zn(2+) is required as a cofactor.

The protein resides in the cytoplasm. One of several proteins that assist in the late maturation steps of the functional core of the 30S ribosomal subunit. Helps release RbfA from mature subunits. May play a role in the assembly of ribosomal proteins into the subunit. Circularly permuted GTPase that catalyzes slow GTP hydrolysis, GTPase activity is stimulated by the 30S ribosomal subunit. This chain is Small ribosomal subunit biogenesis GTPase RsgA, found in Phytoplasma australiense.